Here is a 499-residue protein sequence, read N- to C-terminus: Multiphosphoryl transfer protein (499 aa).

The region spanning 2–142 (LELSESNIHL…AEFCAILMGE (141 aa)) is the PTS EIIA type-2 domain. H62 functions as the Tele-phosphohistidine intermediate; for EIIA activity in the catalytic mechanism. Position 62 is a phosphohistidine; by HPr (H62). Positions 155-285 (SLDVNTQSLL…SDVETQSVEG (131 aa)) are m domain. In terms of domain architecture, HPr 1 spans 286 to 376 (AVVGTFTIRN…KAIANGLGEN (91 aa)). H300 acts as the Pros-phosphohistidine intermediate; for HPr 1 activity in catalysis. H300 carries the post-translational modification Phosphohistidine. Residues 378–409 (SAVPPSEPDTIEIMGDQIHTPAVTEDDNLPAN) form a linker region. One can recognise an HPr 2 domain in the interval 410 to 499 (AIEAVFVIKN…GAVIESGLGE (90 aa)). Phosphohistidine is present on H424. H424 serves as the catalytic Pros-phosphohistidine intermediate; for HPr 2 activity.

The protein localises to the cytoplasm. Its function is as follows. The phosphoenolpyruvate-dependent sugar phosphotransferase system (sugar PTS), a major carbohydrate active transport system, catalyzes the phosphorylation of incoming sugar substrates concomitantly with their translocation across the cell membrane. The enzyme II FruAB PTS system is involved in fructose transport. This Haemophilus influenzae (strain ATCC 51907 / DSM 11121 / KW20 / Rd) protein is Multiphosphoryl transfer protein (fruB).